The following is a 309-amino-acid chain: Aspartate carbamoyltransferase catalytic subunit (309 aa).

Positions 57 and 58 each coordinate carbamoyl phosphate. Lysine 86 serves as a coordination point for L-aspartate. Positions 107, 135, and 138 each coordinate carbamoyl phosphate. Positions 168 and 228 each coordinate L-aspartate. The carbamoyl phosphate site is built by leucine 267 and proline 268.

It belongs to the aspartate/ornithine carbamoyltransferase superfamily. ATCase family. In terms of assembly, heterooligomer of catalytic and regulatory chains.

The enzyme catalyses carbamoyl phosphate + L-aspartate = N-carbamoyl-L-aspartate + phosphate + H(+). The protein operates within pyrimidine metabolism; UMP biosynthesis via de novo pathway; (S)-dihydroorotate from bicarbonate: step 2/3. Its function is as follows. Catalyzes the condensation of carbamoyl phosphate and aspartate to form carbamoyl aspartate and inorganic phosphate, the committed step in the de novo pyrimidine nucleotide biosynthesis pathway. In Nitrosopumilus maritimus (strain SCM1), this protein is Aspartate carbamoyltransferase catalytic subunit.